A 446-amino-acid chain; its full sequence is Methanol utilization control sensor protein MoxY (446 aa).

A run of 3 helical transmembrane segments spans residues 1–21, 101–121, and 144–164; these read MGLA…ILIV, WFSA…THYP, and FSII…LAFL. The 53-residue stretch at 167–219 folds into the HAMP domain; it reads TLLTRRLQSVQAAMAQMQDGRLSVRAPDDRLTEFADLAAGVNALASHLQAEQA. The segment at 390-409 is disordered; it reads TDNGKGPQSGTGRPTPGFGQ.

It localises to the cell inner membrane. Its function is as follows. Member of the two-component regulatory system MoxY/MoxX probably involved in the regulation of the methanol dehydrogenase expression. May function as a membrane-associated protein kinase that phosphorylates MoxX in response to environmental signals. The polypeptide is Methanol utilization control sensor protein MoxY (moxY) (Paracoccus denitrificans).